A 339-amino-acid polypeptide reads, in one-letter code: Fructose-1,6-bisphosphatase isozyme 2 (339 aa).

Residues 3–10 (DRSPFETD) are important for interaction with ALDOA. AMP contacts are provided by residues valine 18 and 28–32 (TGELT). 2 residues coordinate Mg(2+): aspartate 69 and glutamate 98. 113–114 (KY) lines the AMP pocket. Mg(2+)-binding residues include aspartate 119, leucine 121, and aspartate 122. Residue aspartate 122 participates in substrate binding. Position 141 (arginine 141) interacts with AMP. Positions 204 to 208 (KKKGK) match the Nuclear localization signal motif. Substrate is bound at residue 213 to 216 (NEGY). Phosphotyrosine is present on residues tyrosine 216 and tyrosine 219. Substrate contacts are provided by residues 245-249 (YVGSM), tyrosine 265, and lysine 275. Position 281 (glutamate 281) interacts with Mg(2+).

The protein belongs to the FBPase class 1 family. Homotetramer. Interacts with ALDOA; the interaction blocks inhibition by physiological concentrations of AMP and reduces inhibition by Ca(2+). Interacts with alpha-actinin and F-actin. Mg(2+) is required as a cofactor.

It is found in the cell junction. Its subcellular location is the cytoplasm. The protein resides in the nucleus. It localises to the myofibril. The protein localises to the sarcomere. It is found in the z line. It carries out the reaction beta-D-fructose 1,6-bisphosphate + H2O = beta-D-fructose 6-phosphate + phosphate. The protein operates within carbohydrate biosynthesis; gluconeogenesis. With respect to regulation, subject to complex allosteric regulation. The enzyme can assume an active R-state, or an inactive T-state. Intermediate conformations may exist. AMP acts as an allosteric inhibitor. Fructose 2,6-bisphosphate acts as a competitive inhibitor. Strongly inhibited by Ca(2+). Catalyzes the hydrolysis of fructose 1,6-bisphosphate to fructose 6-phosphate in the presence of divalent cations and probably participates in glycogen synthesis from carbohydrate precursors, such as lactate. The chain is Fructose-1,6-bisphosphatase isozyme 2 (FBP2) from Bos taurus (Bovine).